A 194-amino-acid polypeptide reads, in one-letter code: Peptidyl-tRNA hydrolase (194 aa).

Tyr16 is a tRNA binding site. Catalysis depends on His21, which acts as the Proton acceptor. TRNA is bound by residues Phe67, Asn69, and Asn115.

The protein belongs to the PTH family. In terms of assembly, monomer.

It localises to the cytoplasm. It catalyses the reaction an N-acyl-L-alpha-aminoacyl-tRNA + H2O = an N-acyl-L-amino acid + a tRNA + H(+). Its function is as follows. Hydrolyzes ribosome-free peptidyl-tRNAs (with 1 or more amino acids incorporated), which drop off the ribosome during protein synthesis, or as a result of ribosome stalling. In terms of biological role, catalyzes the release of premature peptidyl moieties from peptidyl-tRNA molecules trapped in stalled 50S ribosomal subunits, and thus maintains levels of free tRNAs and 50S ribosomes. The polypeptide is Peptidyl-tRNA hydrolase (Shigella boydii serotype 4 (strain Sb227)).